The following is a 458-amino-acid chain: Fumarate hydratase class II 2 (458 aa).

Residues 98 to 100, 123 to 126, 133 to 135, and Thr-181 contribute to the substrate site; these read SGT, NPND, and SSN. Residue His-182 is the Proton donor/acceptor of the active site. Ser-312 is an active-site residue. Residues Ser-313 and 318 to 320 contribute to the substrate site; that span reads KVN.

Belongs to the class-II fumarase/aspartase family. Fumarase subfamily. As to quaternary structure, homotetramer.

It is found in the cytoplasm. The catalysed reaction is (S)-malate = fumarate + H2O. The protein operates within carbohydrate metabolism; tricarboxylic acid cycle; (S)-malate from fumarate: step 1/1. In terms of biological role, involved in the TCA cycle. Catalyzes the stereospecific interconversion of fumarate to L-malate. The chain is Fumarate hydratase class II 2 from Pseudomonas aeruginosa (strain ATCC 15692 / DSM 22644 / CIP 104116 / JCM 14847 / LMG 12228 / 1C / PRS 101 / PAO1).